A 469-amino-acid chain; its full sequence is UDP-glycosyltransferase 75B1 (469 aa).

The Proton acceptor role is filled by H16. H16 serves as a coordination point for an anthocyanidin. UDP-alpha-D-glucose-binding residues include Q334, H349, W352, S354, E357, D373, and Q374.

It belongs to the UDP-glycosyltransferase family. Interacts with CALS1, ROP1 and phragmoplastin.

The protein resides in the cytoplasm. It localises to the perinuclear region. The protein localises to the cytoskeleton. It is found in the phragmoplast. It catalyses the reaction (indol-3-yl)acetate + UDP-alpha-D-glucose = 1-O-(indol-3-ylacetyl)-beta-D-glucose + UDP. The protein operates within plant hormone metabolism; auxin conjugation. Its function is as follows. Possesses low catalytic activity on indole-3-acetic acid (IAA) in vitro. May transfer UDP-glucose from sucrose synthase to callose synthase for the synthesis of callose at the forming cell plate during cytokinesis. Has high affinity for 4-aminobenzoate. Catalyzes the formation of 4-aminobenzoate glucose ester which represents a storage form of 4-aminobenzoate in the vacuole. Is the major source of this activity in the plant. Also active in vitro on benzoates and benzoate derivatives. The chain is UDP-glycosyltransferase 75B1 (UGT75B1) from Arabidopsis thaliana (Mouse-ear cress).